We begin with the raw amino-acid sequence, 317 residues long: tRNA dimethylallyltransferase (317 aa).

An ATP-binding site is contributed by 14–21; sequence GPTASGKT. 16–21 provides a ligand contact to substrate; sequence TASGKT. Interaction with substrate tRNA regions lie at residues 39–42 and 163–167; these read DSAL and QRIQR.

The protein belongs to the IPP transferase family. Monomer. Mg(2+) serves as cofactor.

It catalyses the reaction adenosine(37) in tRNA + dimethylallyl diphosphate = N(6)-dimethylallyladenosine(37) in tRNA + diphosphate. Functionally, catalyzes the transfer of a dimethylallyl group onto the adenine at position 37 in tRNAs that read codons beginning with uridine, leading to the formation of N6-(dimethylallyl)adenosine (i(6)A). In Stenotrophomonas maltophilia (strain R551-3), this protein is tRNA dimethylallyltransferase.